Consider the following 110-residue polypeptide: T cell receptor alpha variable 39 (110 aa).

A signal peptide spans 1–18; the sequence is MKKLLAMILWLQLDRLSG. An Ig-like domain is found at 19 to 110; sequence ELKVEQNPLF…LSATYFCAVD (92 aa). N36 and N42 each carry an N-linked (GlcNAc...) asparagine glycan. An intrachain disulfide couples C41 to C107.

As to quaternary structure, alpha-beta TR is a heterodimer composed of an alpha and beta chain; disulfide-linked. The alpha-beta TR is associated with the transmembrane signaling CD3 coreceptor proteins to form the TR-CD3 (TcR or TCR). The assembly of alpha-beta TR heterodimers with CD3 occurs in the endoplasmic reticulum where a single alpha-beta TR heterodimer associates with one CD3D-CD3E heterodimer, one CD3G-CD3E heterodimer and one CD247 homodimer forming a stable octameric structure. CD3D-CD3E and CD3G-CD3E heterodimers preferentially associate with TR alpha and TR beta chains, respectively. The association of the CD247 homodimer is the last step of TcR assembly in the endoplasmic reticulum and is required for transport to the cell surface.

The protein localises to the cell membrane. Functionally, v region of the variable domain of T cell receptor (TR) alpha chain that participates in the antigen recognition. Alpha-beta T cell receptors are antigen specific receptors which are essential to the immune response and are present on the cell surface of T lymphocytes. Recognize peptide-major histocompatibility (MH) (pMH) complexes that are displayed by antigen presenting cells (APC), a prerequisite for efficient T cell adaptive immunity against pathogens. Binding of alpha-beta TR to pMH complex initiates TR-CD3 clustering on the cell surface and intracellular activation of LCK that phosphorylates the ITAM motifs of CD3G, CD3D, CD3E and CD247 enabling the recruitment of ZAP70. In turn ZAP70 phosphorylates LAT, which recruits numerous signaling molecules to form the LAT signalosome. The LAT signalosome propagates signal branching to three major signaling pathways, the calcium, the mitogen-activated protein kinase (MAPK) kinase and the nuclear factor NF-kappa-B (NF-kB) pathways, leading to the mobilization of transcription factors that are critical for gene expression and essential for T cell growth and differentiation. The T cell repertoire is generated in the thymus, by V-(D)-J rearrangement. This repertoire is then shaped by intrathymic selection events to generate a peripheral T cell pool of self-MH restricted, non-autoaggressive T cells. Post-thymic interaction of alpha-beta TR with the pMH complexes shapes TR structural and functional avidity. This Homo sapiens (Human) protein is T cell receptor alpha variable 39.